The chain runs to 97 residues: RNA-binding protein Hfq (97 aa).

The 61-residue stretch at Asp10–Val70 folds into the Sm domain. Positions Glu75–Glu97 are disordered. Residues Thr85–Glu97 are compositionally biased toward polar residues.

The protein belongs to the Hfq family. In terms of assembly, homohexamer.

In terms of biological role, RNA chaperone that binds small regulatory RNA (sRNAs) and mRNAs to facilitate mRNA translational regulation in response to envelope stress, environmental stress and changes in metabolite concentrations. Also binds with high specificity to tRNAs. This is RNA-binding protein Hfq from Neisseria meningitidis serogroup C / serotype 2a (strain ATCC 700532 / DSM 15464 / FAM18).